A 436-amino-acid polypeptide reads, in one-letter code: Xylose isomerase (436 aa).

Residues histidine 100 and aspartate 103 contribute to the active site. Mg(2+) is bound by residues glutamate 231, glutamate 267, histidine 270, aspartate 295, aspartate 306, aspartate 308, and aspartate 338.

Belongs to the xylose isomerase family. Homotetramer. Mg(2+) serves as cofactor.

It is found in the cytoplasm. It catalyses the reaction alpha-D-xylose = alpha-D-xylulofuranose. In Agrobacterium fabrum (strain C58 / ATCC 33970) (Agrobacterium tumefaciens (strain C58)), this protein is Xylose isomerase.